We begin with the raw amino-acid sequence, 414 residues long: Serine hydroxymethyltransferase (414 aa).

Residues Leu121 and 125–127 (GHL) each bind (6S)-5,6,7,8-tetrahydrofolate. An N6-(pyridoxal phosphate)lysine modification is found at Lys229.

It belongs to the SHMT family. As to quaternary structure, homodimer. Pyridoxal 5'-phosphate is required as a cofactor.

Its subcellular location is the cytoplasm. The catalysed reaction is (6R)-5,10-methylene-5,6,7,8-tetrahydrofolate + glycine + H2O = (6S)-5,6,7,8-tetrahydrofolate + L-serine. It participates in one-carbon metabolism; tetrahydrofolate interconversion. Its pathway is amino-acid biosynthesis; glycine biosynthesis; glycine from L-serine: step 1/1. In terms of biological role, catalyzes the reversible interconversion of serine and glycine with tetrahydrofolate (THF) serving as the one-carbon carrier. This reaction serves as the major source of one-carbon groups required for the biosynthesis of purines, thymidylate, methionine, and other important biomolecules. Also exhibits THF-independent aldolase activity toward beta-hydroxyamino acids, producing glycine and aldehydes, via a retro-aldol mechanism. This Acidovorax ebreus (strain TPSY) (Diaphorobacter sp. (strain TPSY)) protein is Serine hydroxymethyltransferase.